The primary structure comprises 67 residues: ATP synthase F(0) complex subunit 8 (67 aa).

A helical transmembrane segment spans residues 8-24 (TWFITILSMLITLFILF). Lys54 carries the post-translational modification N6-acetyllysine; alternate. Lys54 is modified (N6-succinyllysine; alternate). Lys57 carries the N6-acetyllysine modification.

This sequence belongs to the ATPase protein 8 family. As to quaternary structure, component of the ATP synthase complex composed at least of ATP5F1A/subunit alpha, ATP5F1B/subunit beta, ATP5MC1/subunit c (homooctomer), MT-ATP6/subunit a, MT-ATP8/subunit 8, ATP5ME/subunit e, ATP5MF/subunit f, ATP5MG/subunit g, ATP5MK/subunit k, ATP5MJ/subunit j, ATP5F1C/subunit gamma, ATP5F1D/subunit delta, ATP5F1E/subunit epsilon, ATP5PF/subunit F6, ATP5PB/subunit b, ATP5PD/subunit d, ATP5PO/subunit OSCP. ATP synthase complex consists of a soluble F(1) head domain (subunits alpha(3) and beta(3)) - the catalytic core - and a membrane F(0) domain - the membrane proton channel (subunits c, a, 8, e, f, g, k and j). These two domains are linked by a central stalk (subunits gamma, delta, and epsilon) rotating inside the F1 region and a stationary peripheral stalk (subunits F6, b, d, and OSCP). Interacts with PRICKLE3.

It localises to the mitochondrion membrane. Subunit 8, of the mitochondrial membrane ATP synthase complex (F(1)F(0) ATP synthase or Complex V) that produces ATP from ADP in the presence of a proton gradient across the membrane which is generated by electron transport complexes of the respiratory chain. ATP synthase complex consist of a soluble F(1) head domain - the catalytic core - and a membrane F(1) domain - the membrane proton channel. These two domains are linked by a central stalk rotating inside the F(1) region and a stationary peripheral stalk. During catalysis, ATP synthesis in the catalytic domain of F(1) is coupled via a rotary mechanism of the central stalk subunits to proton translocation. In vivo, can only synthesize ATP although its ATP hydrolase activity can be activated artificially in vitro. Part of the complex F(0) domain. This Dugong dugon (Dugong) protein is ATP synthase F(0) complex subunit 8.